The following is a 325-amino-acid chain: Phosphatidylglycerol--prolipoprotein diacylglyceryl transferase (325 aa).

4 consecutive transmembrane segments (helical) span residues 19–39, 47–67, 93–113, and 119–139; these read IPLRGYAFCIIIGVFVAVWFG, GGKAGTVADVAVWAVPFGLVG, IWEGGLGIWGAIAFGAVGAWI, and GIPLPAWADALAPGIAIAQAI. Arg141 provides a ligand contact to a 1,2-diacyl-sn-glycero-3-phospho-(1'-sn-glycerol). Helical transmembrane passes span 175-195, 207-225, and 237-257; these read HPTFLYESLWCIGVALLVIWA, FALYVAGYCAGRGWIEYMR, and LNVWTAIVVFILAVVYIVISA. Residues 266-312 show a composition bias toward basic and acidic residues; it reads IVEPDRDATPAEKDGSGEDGSGEKGVAKADAAAKDPLTKDEPGKDAT. Residues 266-325 are disordered; sequence IVEPDRDATPAEKDGSGEDGSGEKGVAKADAAAKDPLTKDEPGKDATAENAGAAGAAEKA. Low complexity predominate over residues 313 to 325; it reads AENAGAAGAAEKA.

It belongs to the Lgt family.

It localises to the cell membrane. It catalyses the reaction L-cysteinyl-[prolipoprotein] + a 1,2-diacyl-sn-glycero-3-phospho-(1'-sn-glycerol) = an S-1,2-diacyl-sn-glyceryl-L-cysteinyl-[prolipoprotein] + sn-glycerol 1-phosphate + H(+). It functions in the pathway protein modification; lipoprotein biosynthesis (diacylglyceryl transfer). Functionally, catalyzes the transfer of the diacylglyceryl group from phosphatidylglycerol to the sulfhydryl group of the N-terminal cysteine of a prolipoprotein, the first step in the formation of mature lipoproteins. The sequence is that of Phosphatidylglycerol--prolipoprotein diacylglyceryl transferase from Streptomyces griseus subsp. griseus (strain JCM 4626 / CBS 651.72 / NBRC 13350 / KCC S-0626 / ISP 5235).